The chain runs to 230 residues: 2-C-methyl-D-erythritol 4-phosphate cytidylyltransferase (230 aa).

Belongs to the IspD/TarI cytidylyltransferase family. IspD subfamily.

It carries out the reaction 2-C-methyl-D-erythritol 4-phosphate + CTP + H(+) = 4-CDP-2-C-methyl-D-erythritol + diphosphate. The protein operates within isoprenoid biosynthesis; isopentenyl diphosphate biosynthesis via DXP pathway; isopentenyl diphosphate from 1-deoxy-D-xylulose 5-phosphate: step 2/6. In terms of biological role, catalyzes the formation of 4-diphosphocytidyl-2-C-methyl-D-erythritol from CTP and 2-C-methyl-D-erythritol 4-phosphate (MEP). The chain is 2-C-methyl-D-erythritol 4-phosphate cytidylyltransferase from Nocardia farcinica (strain IFM 10152).